A 280-amino-acid polypeptide reads, in one-letter code: Energy-coupling factor transporter ATP-binding protein EcfA1 (280 aa).

In terms of domain architecture, ABC transporter spans 7–241; sequence IEVAHLKYEY…GQRLLDLGLD (235 aa). An ATP-binding site is contributed by 41-48; the sequence is GHNGSGKS.

This sequence belongs to the ABC transporter superfamily. Energy-coupling factor EcfA family. As to quaternary structure, forms a stable energy-coupling factor (ECF) transporter complex composed of 2 membrane-embedded substrate-binding proteins (S component), 2 ATP-binding proteins (A component) and 2 transmembrane proteins (T component).

The protein resides in the cell membrane. In terms of biological role, ATP-binding (A) component of a common energy-coupling factor (ECF) ABC-transporter complex. Unlike classic ABC transporters this ECF transporter provides the energy necessary to transport a number of different substrates. This chain is Energy-coupling factor transporter ATP-binding protein EcfA1, found in Latilactobacillus sakei subsp. sakei (strain 23K) (Lactobacillus sakei subsp. sakei).